The following is a 509-amino-acid chain: Putative aldehyde dehydrogenase family 7 member A1 homolog (509 aa).

244–249 (GSTEVG) serves as a coordination point for NAD(+). Catalysis depends on E266, which acts as the Proton acceptor. C300 acts as the Nucleophile in catalysis.

The protein belongs to the aldehyde dehydrogenase family. As to quaternary structure, homotetramer.

The enzyme catalyses an aldehyde + NAD(+) + H2O = a carboxylate + NADH + 2 H(+). The protein is Putative aldehyde dehydrogenase family 7 member A1 homolog of Dictyostelium discoideum (Social amoeba).